The primary structure comprises 400 residues: Enoyl-[acyl-carrier-protein] reductase [NADH] 1 (400 aa).

NAD(+)-binding positions include 48–53 (GASSGY), 74–75 (FE), 111–112 (DA), and 139–140 (LA). Tyrosine 225 is a binding site for substrate. The active-site Proton donor is the tyrosine 235. NAD(+) is bound by residues lysine 244 and 273–275 (VVT).

Belongs to the TER reductase family. As to quaternary structure, monomer.

It carries out the reaction a 2,3-saturated acyl-[ACP] + NAD(+) = a (2E)-enoyl-[ACP] + NADH + H(+). Its pathway is lipid metabolism; fatty acid biosynthesis. Functionally, involved in the final reduction of the elongation cycle of fatty acid synthesis (FAS II). Catalyzes the reduction of a carbon-carbon double bond in an enoyl moiety that is covalently linked to an acyl carrier protein (ACP). This chain is Enoyl-[acyl-carrier-protein] reductase [NADH] 1, found in Vibrio vulnificus (strain YJ016).